The following is a 200-amino-acid chain: MRQRRISGSNLMMVLCVVAMCRAVPINDLIYRASQQSDKLHALSSMLTQELGSEAFPIDRVLACHTSSLQTPTDKEQALQVSESDLLSLARSLLQAWSDPLEVLSSSTNVLPYSAQSTLSKTIQKMQEHSKDLKDGLDILSSKMGPAAQTITSLPFIETNEIGQDKITKLLSCFRRDSHKIDSFLKVLRCRAANMQPQVC.

Residues 1–23 (MRQRRISGSNLMMVLCVVAMCRA) form the signal peptide. 2 cysteine pairs are disulfide-bonded: Cys-64/Cys-173 and Cys-190/Cys-200.

The protein belongs to the somatotropin/prolactin family.

The protein localises to the secreted. The protein is Prolactin-2 (prl2) of Oreochromis mossambicus (Mozambique tilapia).